The chain runs to 339 residues: Cilia- and flagella-associated protein 36 (339 aa).

Coiled-coil stretches lie at residues Ile-142 to Gln-188 and Asn-255 to Leu-330. Disordered regions lie at residues Asn-177 to Pro-212 and Lys-281 to Lys-318. The span at Lys-187–Glu-200 shows a compositional bias: polar residues. Positions Lys-281–Ser-313 are enriched in basic and acidic residues.

Belongs to the CFAP36 family.

It localises to the nucleus. Its subcellular location is the cytoplasm. The protein localises to the cell projection. It is found in the cilium. The protein resides in the flagellum. This is Cilia- and flagella-associated protein 36 from Xenopus tropicalis (Western clawed frog).